Consider the following 469-residue polypeptide: Trigger factor (469 aa).

A PPIase FKBP-type domain is found at 165–250 (GDCVTIDYLG…VKAISKPDEL (86 aa)). The segment covering 439-460 (EYDESDLTEKKPEKKKGVEKTP) has biased composition (basic and acidic residues). The disordered stretch occupies residues 439 to 469 (EYDESDLTEKKPEKKKGVEKTPIRKKAPKKG).

It belongs to the FKBP-type PPIase family. Tig subfamily.

It localises to the cytoplasm. The catalysed reaction is [protein]-peptidylproline (omega=180) = [protein]-peptidylproline (omega=0). Functionally, involved in protein export. Acts as a chaperone by maintaining the newly synthesized protein in an open conformation. Functions as a peptidyl-prolyl cis-trans isomerase. This is Trigger factor from Bartonella quintana (strain Toulouse) (Rochalimaea quintana).